The primary structure comprises 261 residues: Proteasome subunit alpha type-4 (261 aa).

Residues Ser-13 and Ser-75 each carry the phosphoserine modification. Lys-127 carries the N6-acetyllysine modification. The residue at position 173 (Ser-173) is a Phosphoserine. Lys-176 is subject to N6-acetyllysine. The tract at residues His-240–Lys-261 is disordered.

This sequence belongs to the peptidase T1A family. The 26S proteasome consists of a 20S proteasome core and two 19S regulatory subunits. The 20S proteasome core is a barrel-shaped complex made of 28 subunits that are arranged in four stacked rings. The two outer rings are each formed by seven alpha subunits, and the two inner rings are formed by seven beta subunits. The proteolytic activity is exerted by three beta-subunits PSMB5, PSMB6 and PSMB7. In terms of tissue distribution, ubiquitous.

The protein localises to the cytoplasm. It is found in the nucleus. In terms of biological role, component of the 20S core proteasome complex involved in the proteolytic degradation of most intracellular proteins. This complex plays numerous essential roles within the cell by associating with different regulatory particles. Associated with two 19S regulatory particles, forms the 26S proteasome and thus participates in the ATP-dependent degradation of ubiquitinated proteins. The 26S proteasome plays a key role in the maintenance of protein homeostasis by removing misfolded or damaged proteins that could impair cellular functions, and by removing proteins whose functions are no longer required. Associated with the PA200 or PA28, the 20S proteasome mediates ubiquitin-independent protein degradation. This type of proteolysis is required in several pathways including spermatogenesis (20S-PA200 complex) or generation of a subset of MHC class I-presented antigenic peptides (20S-PA28 complex). In Rattus norvegicus (Rat), this protein is Proteasome subunit alpha type-4 (Psma4).